The primary structure comprises 492 residues: N-succinylglutamate 5-semialdehyde dehydrogenase (492 aa).

Position 225 to 230 (225 to 230 (GSSNTG)) interacts with NAD(+). Catalysis depends on residues Glu-248 and Cys-282.

The protein belongs to the aldehyde dehydrogenase family. AstD subfamily.

The enzyme catalyses N-succinyl-L-glutamate 5-semialdehyde + NAD(+) + H2O = N-succinyl-L-glutamate + NADH + 2 H(+). It participates in amino-acid degradation; L-arginine degradation via AST pathway; L-glutamate and succinate from L-arginine: step 4/5. Its function is as follows. Catalyzes the NAD-dependent reduction of succinylglutamate semialdehyde into succinylglutamate. This Colwellia psychrerythraea (strain 34H / ATCC BAA-681) (Vibrio psychroerythus) protein is N-succinylglutamate 5-semialdehyde dehydrogenase.